Here is a 417-residue protein sequence, read N- to C-terminus: Phosphoglycerate kinase 2 (417 aa).

Ser-2 is modified (N-acetylserine). Phosphoserine occurs at positions 2 and 4. The residue at position 11 (Lys-11) is an N6-acetyllysine. 10 residues coordinate (2R)-3-phosphoglycerate: Val-23, Asp-24, Phe-25, Asn-26, Gln-38, Arg-39, Ser-62, His-63, Gly-65, and Arg-66. Lys-75, Lys-86, and Lys-97 each carry N6-acetyllysine. (2R)-3-phosphoglycerate is bound by residues Leu-122 and Arg-123. Lys-131 and Lys-146 each carry N6-acetyllysine. The (2R)-3-phosphoglycerate site is built by His-170 and Arg-171. Phosphotyrosine is present on Tyr-196. Lys-199 is subject to N6-acetyllysine. Gly-214 contacts ADP. A CDP-binding site is contributed by Gly-214. Positions 215 and 216 each coordinate AMP. An ATP-binding site is contributed by Ala-215. Ala-215 is a Mg(2+) binding site. Residues Ala-218 and Asp-219 each coordinate Mg(2+). CDP is bound at residue Asp-219. Lys-220 is a binding site for AMP. Residue Lys-220 participates in ATP binding. Position 238 (Gly-238) interacts with ADP. A CDP-binding site is contributed by Gly-238. Gly-239 is an AMP binding site. Gly-239 is a binding site for ATP. N6-acetyllysine is present on residues Lys-267 and Lys-291. An AMP-binding site is contributed by Ala-313. Ala-313 contacts ATP. Residues Gly-338 and Phe-343 each contribute to the CDP site. Phe-343 contacts ADP. Residue Glu-344 participates in AMP binding. ATP is bound by residues Glu-344, Asp-375, and Thr-376. Mg(2+) is bound at residue Asp-375.

The protein belongs to the phosphoglycerate kinase family. As to quaternary structure, monomer. The cofactor is Mg(2+). As to expression, testis specific.

It localises to the cytoplasm. The catalysed reaction is (2R)-3-phosphoglycerate + ATP = (2R)-3-phospho-glyceroyl phosphate + ADP. The protein operates within carbohydrate degradation; glycolysis; pyruvate from D-glyceraldehyde 3-phosphate: step 2/5. Its function is as follows. Essential for sperm motility and male fertility but is not required for the completion of spermatogenesis. The sequence is that of Phosphoglycerate kinase 2 from Sus scrofa (Pig).